The chain runs to 328 residues: MSGTTQLRPTYHGYVRDTTDALIIFEACLAGQLLHVPRRPHDRERQNVIKSGSIFVYEEHASGIKRWTDSITWSPSRIMGNYLVYRQLEKPFAPGEKKRAKGKGGKSTTQSGGISKPRQRNALPFQQGLEQGNEYPSVPSDEDRQLVGSLVDSYDFKEQGLVKKTISITYNGVPHHLISYYTVEDVKAGLLTSPADDQGLRGVVPRAELTNGQNFRAPIEESIGGAYMPGMRHSAGFPHPSAYPTLLHQPQMHQPQVHQPLAHQPQVHQPLAHQPQVHQPLAHQPQVHQQYVHQPQAHQPYMHQPQVHLNGYQPSYGDGQWWKYLGGT.

2 disordered regions span residues 94 to 120 (PGEKKRAKGKGGKSTTQSGGISKPRQR) and 251 to 293 (QMHQ…QYVH). Composition is skewed to low complexity over residues 106 to 116 (KSTTQSGGISK), 251 to 261 (QMHQPQVHQPL), and 282 to 293 (AHQPQVHQQYVH).

It belongs to the MIT1/WOR1 family.

It localises to the nucleus. Global transcriptional regulator of transcription that impacts, but is not absolutely required for secondary metabolism and pathogenicity on maize. Regulates synthesis of multiple secondary metabolites, including fumonisins and fusarins. This is Global transcription regulator sge1 from Gibberella moniliformis (strain M3125 / FGSC 7600) (Maize ear and stalk rot fungus).